A 248-amino-acid chain; its full sequence is MTYKLILLRHGHSEWNAKNLFTGWVDVDLNDQGREEAARGGELLVENNVLPDVLYTSLLKRAINTANIALDKADRGWIPVKRDWRLNERHYGALQGKDKAQTLAEYGEEQFMEWRRSYDTPPPPLDDDSEFSQAHDPRYADLGDALPRTECLKDVLIRLMPYWESDIKEDLKAGKTVLVTAHGNSLRALVKHLDGISDEAIAGLNIPTGIPLVYDLDENFKPLNPGGTYLDPEAAAESIKAVANQGKK.

Substrate is bound by residues 9–16, 22–23, R61, 88–91, K99, 115–116, and 183–184; these read RHGHSEWN, TG, ERHY, RR, and GN. The Tele-phosphohistidine intermediate role is filled by H10. E88 acts as the Proton donor/acceptor in catalysis.

The protein belongs to the phosphoglycerate mutase family. BPG-dependent PGAM subfamily.

The catalysed reaction is (2R)-2-phosphoglycerate = (2R)-3-phosphoglycerate. It functions in the pathway carbohydrate degradation; glycolysis; pyruvate from D-glyceraldehyde 3-phosphate: step 3/5. In terms of biological role, catalyzes the interconversion of 2-phosphoglycerate and 3-phosphoglycerate. The protein is 2,3-bisphosphoglycerate-dependent phosphoglycerate mutase of Arthrobacter sp. (strain FB24).